The following is a 363-amino-acid chain: Peptide chain release factor 1 (363 aa).

Residue Q237 is modified to N5-methylglutamine.

The protein belongs to the prokaryotic/mitochondrial release factor family. In terms of processing, methylated by PrmC. Methylation increases the termination efficiency of RF1.

Its subcellular location is the cytoplasm. Its function is as follows. Peptide chain release factor 1 directs the termination of translation in response to the peptide chain termination codons UAG and UAA. The protein is Peptide chain release factor 1 (prfA) of Mycoplasma capricolum subsp. capricolum (strain California kid / ATCC 27343 / NCTC 10154).